The sequence spans 541 residues: Synaptotagmin-1 (541 aa).

The Extracellular portion of the chain corresponds to 1–11 (MGFFSTILGFC). A helical membrane pass occupies residues 12–32 (GFGVGISLGLVIGYVLFVYLL). At 33 to 541 (PNDVKDPEIR…QIELEWRTAS (509 aa)) the chain is on the cytoplasmic side. One can recognise an SMP-LTD domain in the interval 67–249 (DFDRVDWINR…WPKTLVVPIL (183 aa)). A phospholipid binding region spans residues 227–509 (QEQIKDQVAN…TLGYVDIPVV (283 aa)). 2 C2 domains span residues 240–362 (WPKT…AFTL) and 401–521 (GFEE…NQKF). Ca(2+)-binding residues include Asp276, Asp282, Asp332, and Glu334.

Belongs to the synaptotagmin family. In terms of assembly, interacts with cabbage leaf curl virus (CaLCuV) BC1 protein and tobacco mosaic virus (TMV) MP protein. Interacts with ROSY1. The cofactor is Ca(2+). In terms of tissue distribution, expressed in roots, shoots, rosette and cauline leaves, inflorescences, and siliques. In roots, expressed in vascular bundle, epidermis, the differential zone of the tips of root hairs, and the quiescent center and columella of root tips.

It localises to the cell membrane. Its subcellular location is the endosome membrane. Functionally, plays an important role in maintaining plasma membrane integrity during freezing and osmotic stresses. May function in membrane resealing during calcium-dependent freezing tolerance. May regulate endocytosis and endosome recycling at the plasma membrane and cell-to-cell trafficking of cabbage leaf curl virus (CaLCuV) and tobacco mosaic virus (TMV) movement proteins via plasmodesmata. The protein is Synaptotagmin-1 (SYT1) of Arabidopsis thaliana (Mouse-ear cress).